A 167-amino-acid polypeptide reads, in one-letter code: NAD(P)H-quinone oxidoreductase subunit I, chloroplastic (167 aa).

2 4Fe-4S ferredoxin-type domains span residues 55–84 (GRIHFEFDKCIACEVCVRVCPIDLPVVDWK) and 95–124 (LNYSIDFGICIFCGNCVEYCPTNCLSMTEE). Cys64, Cys67, Cys70, Cys74, Cys104, Cys107, Cys110, and Cys114 together coordinate [4Fe-4S] cluster.

The protein belongs to the complex I 23 kDa subunit family. As to quaternary structure, NDH is composed of at least 16 different subunits, 5 of which are encoded in the nucleus. The cofactor is [4Fe-4S] cluster.

It is found in the plastid. Its subcellular location is the chloroplast thylakoid membrane. The catalysed reaction is a plastoquinone + NADH + (n+1) H(+)(in) = a plastoquinol + NAD(+) + n H(+)(out). It carries out the reaction a plastoquinone + NADPH + (n+1) H(+)(in) = a plastoquinol + NADP(+) + n H(+)(out). NDH shuttles electrons from NAD(P)H:plastoquinone, via FMN and iron-sulfur (Fe-S) centers, to quinones in the photosynthetic chain and possibly in a chloroplast respiratory chain. The immediate electron acceptor for the enzyme in this species is believed to be plastoquinone. Couples the redox reaction to proton translocation, and thus conserves the redox energy in a proton gradient. The chain is NAD(P)H-quinone oxidoreductase subunit I, chloroplastic from Arabis hirsuta (Hairy rock-cress).